A 208-amino-acid polypeptide reads, in one-letter code: MTEQAITAAQMRAKDQFTINQIGIPSLVLMERASLAVRDAILTHYPAANKIVVVAGQGNNGGDGLAIARLLHVAGRGVAILTIGNSAHASSEHQTQAHICDYYQIPVASDPALLKDADLIIDAIFGIGIDRPVEGAYATVIKQVNAAHAPVVAVDVPSGINTDTGAVMGVAVKADLTVTFSYNKTGLVTDQGQAYAGRVIVADDMGTY.

The region spanning 11 to 208 (MRAKDQFTIN…VIVADDMGTY (198 aa)) is the YjeF N-terminal domain. 59-63 (NNGGD) contributes to the (6S)-NADPHX binding site. 2 residues coordinate K(+): Asn60 and Asp122. (6S)-NADPHX is bound by residues 126-132 (GIGIDRP), Tyr137, and Asp155. Ser158 serves as a coordination point for K(+).

It belongs to the NnrE/AIBP family. Requires K(+) as cofactor.

It catalyses the reaction (6R)-NADHX = (6S)-NADHX. It carries out the reaction (6R)-NADPHX = (6S)-NADPHX. In terms of biological role, catalyzes the epimerization of the S- and R-forms of NAD(P)HX, a damaged form of NAD(P)H that is a result of enzymatic or heat-dependent hydration. This is a prerequisite for the S-specific NAD(P)H-hydrate dehydratase to allow the repair of both epimers of NAD(P)HX. The polypeptide is NAD(P)H-hydrate epimerase (Limosilactobacillus fermentum (strain NBRC 3956 / LMG 18251) (Lactobacillus fermentum)).